Reading from the N-terminus, the 134-residue chain is Holo-[acyl-carrier-protein] synthase (134 aa).

Residues aspartate 8 and glutamate 58 each coordinate Mg(2+).

The protein belongs to the P-Pant transferase superfamily. AcpS family. It depends on Mg(2+) as a cofactor.

Its subcellular location is the cytoplasm. The catalysed reaction is apo-[ACP] + CoA = holo-[ACP] + adenosine 3',5'-bisphosphate + H(+). Transfers the 4'-phosphopantetheine moiety from coenzyme A to a Ser of acyl-carrier-protein. The chain is Holo-[acyl-carrier-protein] synthase from Acidiphilium cryptum (strain JF-5).